A 1018-amino-acid chain; its full sequence is Contactin-1 (1018 aa).

Positions 1–20 (MKMWLLVSHLVIISITTCLA) are cleaved as a signal peptide. 6 Ig-like C2-type domains span residues 41–131 (PIFE…ATLS), 137–223 (PFPP…KSVF), 241–326 (PADI…ARIY), 331–407 (PEWV…AELK), 413–500 (PTFE…GTLV), and 504–601 (PTRI…LVVR). Disulfide bonds link Cys-65–Cys-114 and Cys-158–Cys-211. N-linked (GlcNAc...) asparagine glycans are attached at residues Asn-208 and Asn-258. A disulfide bond links Cys-263 and Cys-310. N-linked (GlcNAc...) asparagine glycosylation is present at Asn-338. Cystine bridges form between Cys-352/Cys-391 and Cys-436/Cys-484. Asn-457 and Asn-473 each carry an N-linked (GlcNAc...) asparagine glycan. A glycan (N-linked (GlcNAc...) (complex) asparagine) is linked at Asn-494. Asn-521 is a glycosylation site (N-linked (GlcNAc...) asparagine). Cys-526 and Cys-583 are oxidised to a cystine. Asn-591 carries an N-linked (GlcNAc...) asparagine glycan. Fibronectin type-III domains are found at residues 606-704 (PPGG…TDGA), 709-806 (APSD…SAQD), 811-906 (APTE…APPS), and 907-1000 (QPPR…TLSP). The disordered stretch occupies residues 693–717 (SIPSNRIKTDGAAPNVAPSDVGGGG). N-linked (GlcNAc...) asparagine glycosylation occurs at Asn-933. Ser-993 carries GPI-anchor amidated serine lipidation. Positions 994–1018 (GAPTLSPSLLGLLLPAFGILVYLEF) are cleaved as a propeptide — removed in mature form.

The protein belongs to the immunoglobulin superfamily. Contactin family. In terms of assembly, monomer. Interacts with CNTNAP1 in cis form. Binds to the carbonic-anhydrase like domain of PTPRZ1. Interacts with NOTCH1 and TNR. Detected in a complex with NRCAM and PTPRB. Interacts with TASOR. In terms of tissue distribution, strongly expressed in brain and in neuroblastoma and retinoblastoma cell lines. Lower levels of expression in lung, pancreas, kidney and skeletal muscle.

Its subcellular location is the cell membrane. Contactins mediate cell surface interactions during nervous system development. Involved in the formation of paranodal axo-glial junctions in myelinated peripheral nerves and in the signaling between axons and myelinating glial cells via its association with CNTNAP1. Participates in oligodendrocytes generation by acting as a ligand of NOTCH1. Its association with NOTCH1 promotes NOTCH1 activation through the released notch intracellular domain (NICD) and subsequent translocation to the nucleus. Interaction with TNR induces a repulsion of neurons and an inhibition of neurite outgrowth. In Homo sapiens (Human), this protein is Contactin-1 (CNTN1).